The following is a 728-amino-acid chain: Protein Hook homolog 1 (728 aa).

Met1 carries the N-acetylmethionine modification. A sufficient for interaction with microtubules region spans residues 1–555 (MEETQPPPQP…LKQKLEAHME (555 aa)). In terms of domain architecture, Calponin-homology (CH) spans 12–128 (LPLCDSLMIW…RLLQLILGCA (117 aa)). Coiled-coil stretches lie at residues 169-434 (PNDA…RCSQ) and 477-658 (LRLQ…AKFR). The interval 169 to 444 (PNDAVGELEQ…VQQDHLNQTD (276 aa)) is sufficient for homodimerization, interaction wit HOOK2, HOOK3 and AP4M1. Ser235 carries the phosphoserine modification. The disordered stretch occupies residues 481–512 (QEGSENERIEELQEQLEQKHRKMNELETEQRL). Basic and acidic residues predominate over residues 503–512 (MNELETEQRL). Residues 657–728 (FRDYEEKLIV…SVKVPATTSD (72 aa)) form a sufficient for interaction with AKTIP and VPS18 region. Thr699 bears the Phosphothreonine mark. Ser719 and Ser727 each carry phosphoserine.

The protein belongs to the hook family. In terms of assembly, self-associates. Component of the FTS/Hook/FHIP complex (FHF complex), composed of AKTIP/FTS, FHIP1B, and one or more members of the Hook family of proteins HOOK1, HOOK2, and HOOK3. Interacts directly with AKTIP/FTS, HOOK2 and HOOK3. Associates with several subunits of the homotypic vesicular sorting complex (the HOPS complex) including VPS16, VPS18, VPS39 and VPS41; these interactions may be indirect. Interacts with CCDC181. Interacts (via coiled-coil region) with RIMBP3 (via C-terminus). Interacts with LRGUK (via guanylate kinase-like domain). Interacts with microtubules. May interact with CLN3. Interacts with AP4M1; the interaction is direct, mediates the interaction between FTS-Hook-FHIP (FHF) complex and AP-4 and the perinuclear distribution of AP-4.

The protein localises to the cytoplasm. It is found in the cytoskeleton. Functionally, component of the FTS/Hook/FHIP complex (FHF complex). The FHF complex may function to promote vesicle trafficking and/or fusion via the homotypic vesicular protein sorting complex (the HOPS complex). FHF complex promotes the distribution of AP-4 complex to the perinuclear area of the cell. Required for spermatid differentiation. Probably involved in the positioning of the microtubules of the manchette and the flagellum in relation to the membrane skeleton. The protein is Protein Hook homolog 1 of Homo sapiens (Human).